Consider the following 197-residue polypeptide: ATP-dependent Clp protease proteolytic subunit 2 (197 aa).

Ser96 (nucleophile) is an active-site residue. His121 is a catalytic residue.

The protein belongs to the peptidase S14 family. Fourteen ClpP subunits assemble into 2 heptameric rings which stack back to back to give a disk-like structure with a central cavity, resembling the structure of eukaryotic proteasomes.

Its subcellular location is the cytoplasm. It carries out the reaction Hydrolysis of proteins to small peptides in the presence of ATP and magnesium. alpha-casein is the usual test substrate. In the absence of ATP, only oligopeptides shorter than five residues are hydrolyzed (such as succinyl-Leu-Tyr-|-NHMec, and Leu-Tyr-Leu-|-Tyr-Trp, in which cleavage of the -Tyr-|-Leu- and -Tyr-|-Trp bonds also occurs).. Functionally, cleaves peptides in various proteins in a process that requires ATP hydrolysis. Has a chymotrypsin-like activity. Plays a major role in the degradation of misfolded proteins. The protein is ATP-dependent Clp protease proteolytic subunit 2 of Synechococcus sp. (strain CC9605).